Reading from the N-terminus, the 398-residue chain is Acetate kinase (398 aa).

Asn-7 contributes to the Mg(2+) binding site. ATP is bound at residue Lys-14. Arg-91 contributes to the substrate binding site. Asp-148 functions as the Proton donor/acceptor in the catalytic mechanism. ATP-binding positions include 208-212 (HLGNG), 283-285 (DFR), and 331-335 (GIGEH). Glu-386 contacts Mg(2+).

It belongs to the acetokinase family. Homodimer. Mg(2+) serves as cofactor. Requires Mn(2+) as cofactor.

It is found in the cytoplasm. It catalyses the reaction acetate + ATP = acetyl phosphate + ADP. It functions in the pathway metabolic intermediate biosynthesis; acetyl-CoA biosynthesis; acetyl-CoA from acetate: step 1/2. Functionally, catalyzes the formation of acetyl phosphate from acetate and ATP. Can also catalyze the reverse reaction. This Clostridium botulinum (strain Eklund 17B / Type B) protein is Acetate kinase.